Consider the following 411-residue polypeptide: Acetylornithine aminotransferase (411 aa).

Residues 107–108 (GT) and Phe-141 each bind pyridoxal 5'-phosphate. Position 144 (Arg-144) interacts with N(2)-acetyl-L-ornithine. 227-230 (DEIQ) provides a ligand contact to pyridoxal 5'-phosphate. Residue Lys-256 is modified to N6-(pyridoxal phosphate)lysine. Thr-284 is a binding site for N(2)-acetyl-L-ornithine. Pyridoxal 5'-phosphate is bound at residue Thr-285.

The protein belongs to the class-III pyridoxal-phosphate-dependent aminotransferase family. ArgD subfamily. As to quaternary structure, homodimer. Pyridoxal 5'-phosphate is required as a cofactor.

It localises to the cytoplasm. It catalyses the reaction N(2)-acetyl-L-ornithine + 2-oxoglutarate = N-acetyl-L-glutamate 5-semialdehyde + L-glutamate. It functions in the pathway amino-acid biosynthesis; L-arginine biosynthesis; N(2)-acetyl-L-ornithine from L-glutamate: step 4/4. This Xylella fastidiosa (strain Temecula1 / ATCC 700964) protein is Acetylornithine aminotransferase.